The primary structure comprises 171 residues: MVKPGQILRAAVRETAEPLTELAGDSVSSAGRVSAAYHAIRNAIRTNVFPPGYQAAEIEIARQLGMSRTPVHEAMARLQEDGLVRILPKKGIIICALSPADIEEIYEVTIALEGAAASRLAMIDAPVKAEVVALLRDATEAMVAALERNDLPGWAAADERFHETLVACAAQ.

The HTH gntR-type domain maps to 30–97; sequence AGRVSAAYHA…PKKGIIICAL (68 aa). Residues 57–76 constitute a DNA-binding region (H-T-H motif); sequence EIEIARQLGMSRTPVHEAMA.

This is an uncharacterized protein from Agrobacterium vitis (Rhizobium vitis).